The following is a 185-amino-acid chain: Pyridoxal 5'-phosphate synthase subunit PdxT (185 aa).

46-48 (GES) contacts L-glutamine. Cys-78 functions as the Nucleophile in the catalytic mechanism. L-glutamine is bound by residues Arg-106 and 132-133 (IR). Active-site charge relay system residues include His-168 and Glu-170.

Belongs to the glutaminase PdxT/SNO family. As to quaternary structure, in the presence of PdxS, forms a dodecamer of heterodimers. Only shows activity in the heterodimer.

It carries out the reaction aldehydo-D-ribose 5-phosphate + D-glyceraldehyde 3-phosphate + L-glutamine = pyridoxal 5'-phosphate + L-glutamate + phosphate + 3 H2O + H(+). It catalyses the reaction L-glutamine + H2O = L-glutamate + NH4(+). The protein operates within cofactor biosynthesis; pyridoxal 5'-phosphate biosynthesis. Functionally, catalyzes the hydrolysis of glutamine to glutamate and ammonia as part of the biosynthesis of pyridoxal 5'-phosphate. The resulting ammonia molecule is channeled to the active site of PdxS. The protein is Pyridoxal 5'-phosphate synthase subunit PdxT of Corynebacterium diphtheriae (strain ATCC 700971 / NCTC 13129 / Biotype gravis).